Consider the following 276-residue polypeptide: NH(3)-dependent NAD(+) synthetase (276 aa).

43-50 is an ATP binding site; the sequence is GISGGVDS. D49 contacts Mg(2+). R146 is a binding site for deamido-NAD(+). T166 contacts ATP. E171 lines the Mg(2+) pocket. Deamido-NAD(+)-binding residues include K179 and D186. Positions 195 and 217 each coordinate ATP. 266–267 lines the deamido-NAD(+) pocket; it reads HK.

The protein belongs to the NAD synthetase family. In terms of assembly, homodimer.

It catalyses the reaction deamido-NAD(+) + NH4(+) + ATP = AMP + diphosphate + NAD(+) + H(+). The protein operates within cofactor biosynthesis; NAD(+) biosynthesis; NAD(+) from deamido-NAD(+) (ammonia route): step 1/1. Its function is as follows. Catalyzes the ATP-dependent amidation of deamido-NAD to form NAD. Uses ammonia as a nitrogen source. The polypeptide is NH(3)-dependent NAD(+) synthetase (Shewanella frigidimarina (strain NCIMB 400)).